Consider the following 198-residue polypeptide: Transcriptional regulator GfcR (198 aa).

This sequence belongs to the purine/pyrimidine phosphoribosyltransferase family. GfcR subfamily.

The polypeptide is Transcriptional regulator GfcR (Methanocorpusculum labreanum (strain ATCC 43576 / DSM 4855 / Z)).